We begin with the raw amino-acid sequence, 1016 residues long: Probably inactive leucine-rich repeat receptor-like protein kinase At3g28040 (1016 aa).

The signal sequence occupies residues 1-26; that stretch reads MGKQRRTMISFTLFLTLTMMSSLING. Topologically, residues 27–646 are extracellular; it reads DTDSIQLNDD…FHRRMFLSVS (620 aa). 20 LRR repeats span residues 102-124, 125-147, 149-171, 174-196, 198-219, 224-245, 248-270, 272-295, 296-318, 320-342, 344-366, 368-390, 391-413, 416-438, 440-462, 464-486, 488-510, 512-535, 536-559, and 560-582; these read RLKV…SNNN, HLQK…LGSI, SLQH…LFNN, SLRY…LFRC, VLNS…VSGI, RLRA…GILS, NLKE…IGLC, HLNR…QKLK, SLNH…IGDM, GLVH…ISNL, SLKD…LESC, ELMI…FFDL, GLQE…SSRL, SLIR…VGLF, HMRY…IEFL, NLTV…ICES, SLQI…IGNC, SLKL…SNLQ, ELKI…GDLQ, and NLLL…DVFQ. Residues Asn-112, Asn-135, and Asn-171 are each glycosylated (N-linked (GlcNAc...) asparagine). The N-linked (GlcNAc...) asparagine glycan is linked to Asn-203. Asn-349 carries N-linked (GlcNAc...) asparagine glycosylation. 4 N-linked (GlcNAc...) asparagine glycosylation sites follow: Asn-445, Asn-464, Asn-509, and Asn-522. Asn-565 is a glycosylation site (N-linked (GlcNAc...) asparagine). The helical transmembrane segment at 647-667 threads the bilayer; that stretch reads VIVAISAAILIFSGVIIITLL. At 668-1016 the chain is on the cytoplasmic side; the sequence is NASVRRRLAF…PVPHRIMDSF (349 aa). In terms of domain architecture, Protein kinase spans 726–1013; it reads LNKASRIGEG…INSPVPHRIM (288 aa). ATP contacts are provided by residues 732–740 and Lys-755; that span reads IGEGVFGTV. A phosphotyrosine mark is found at Tyr-841 and Tyr-898.

It belongs to the protein kinase superfamily. Ser/Thr protein kinase family.

The protein localises to the membrane. This Arabidopsis thaliana (Mouse-ear cress) protein is Probably inactive leucine-rich repeat receptor-like protein kinase At3g28040.